The following is a 198-amino-acid chain: Nucleoid occlusion factor SlmA (198 aa).

The region spanning Asn-10–Leu-70 is the HTH tetR-type domain. A DNA-binding region (H-T-H motif) is located at residues Thr-33–Phe-52. Residues Glu-117–Arg-144 are a coiled coil.

Belongs to the nucleoid occlusion factor SlmA family. In terms of assembly, homodimer. Interacts with FtsZ.

The protein localises to the cytoplasm. It is found in the nucleoid. Its function is as follows. Required for nucleoid occlusion (NO) phenomenon, which prevents Z-ring formation and cell division over the nucleoid. Acts as a DNA-associated cell division inhibitor that binds simultaneously chromosomal DNA and FtsZ, and disrupts the assembly of FtsZ polymers. SlmA-DNA-binding sequences (SBS) are dispersed on non-Ter regions of the chromosome, preventing FtsZ polymerization at these regions. In Escherichia coli O127:H6 (strain E2348/69 / EPEC), this protein is Nucleoid occlusion factor SlmA.